We begin with the raw amino-acid sequence, 137 residues long: Small ribosomal subunit protein bS16 (137 aa).

Residues 104–118 (ADEKKKPVLKPKTEK) show a composition bias toward basic and acidic residues. The tract at residues 104–137 (ADEKKKPVLKPKTEKAAPAPEAAAPEAESTEEQA) is disordered. A compositionally biased stretch (low complexity) spans 119–130 (AAPAPEAAAPEA).

This sequence belongs to the bacterial ribosomal protein bS16 family.

This Clavibacter michiganensis subsp. michiganensis (strain NCPPB 382) protein is Small ribosomal subunit protein bS16.